The chain runs to 428 residues: GTPase Obg (428 aa).

The 158-residue stretch at 1 to 158 (MFVDQVKIYV…RDVILELKVL (158 aa)) folds into the Obg domain. Residues 117–145 (ARGGRGGRGNSRFATPTNPAPEIAENGEP) are disordered. Residues 159 to 329 (ADVGLVGFPS…LLFEVANLLE (171 aa)) form the OBG-type G domain. GTP contacts are provided by residues 165–172 (GFPSVGKS), 190–194 (FTTIV), 212–215 (DLPG), 282–285 (NKMD), and 310–312 (SAV). Residues Ser-172 and Thr-192 each contribute to the Mg(2+) site. An OCT domain is found at 350–428 (KLETEGVKFD…ILEYEFEFID (79 aa)).

Belongs to the TRAFAC class OBG-HflX-like GTPase superfamily. OBG GTPase family. In terms of assembly, monomer. Mg(2+) is required as a cofactor.

It localises to the cytoplasm. Functionally, an essential GTPase which binds GTP, GDP and possibly (p)ppGpp with moderate affinity, with high nucleotide exchange rates and a fairly low GTP hydrolysis rate. Plays a role in control of the cell cycle, stress response, ribosome biogenesis and in those bacteria that undergo differentiation, in morphogenesis control. The polypeptide is GTPase Obg (Bacillus cereus (strain ATCC 10987 / NRS 248)).